A 1105-amino-acid chain; its full sequence is MNSDDDSVFNDDLNDSEITNLIHNIPSSSSSCSSSKNKLQRNLYGEIIPEQYVEIDSSKGYTELPPTHHALNYENLSSYIYPTNFEVRDYQFNIVQRAFYDNLLVALPTGLGKTFIASTVMLNFTRWFPRGKIIFMAPTKPLVAQQIKACCGITGIPTSEVAILLDKSRRNRADIWDSKTVFFTTPQVVENDLTAGIIDPKEVVLLVIDEAHKSKGNYAYNNVVKFITRFNISFRILALTATPASDVEGVQEIIDNLSISKVEVRTEQSIDITKYMKQKKIERVTVSPSVEICELVDMLCTAIQPVLSMANERRIYDMSDPSKINAFQVIDASQRLLKNPTIPEGLKWQNYFILQILNVVGQALRRLNIYGIKSFYNYFDQKHKEFTIKFKNKKSNNQTAARFYFHDNIKLILDKCKELIADDNFLGHPKLEILINELDEFFKENEANDSRVIIFTEFRESALDIVSSIERIGSNLRPHIFIGQSKEKEKFDEEAYLSKGKKGRTKGKATKGKQNSETPERSTSRTSSEDAQIKGMNQKLQKDLIKKFKKGEYNILVATSIGEEGLDIGEVDLIVCYDSTSSPIKNIQRMGRTGRKRDGKVLLLFAGNEESKFDKAMAGYEFIQQHIMNGRLITLAQSNRIIPKSYKPIVEKKFIEIPEENTEIKAEEDEDEIIRIATSYMNNKGKKVTKSKSKSKSNSKSKKIEKRFFMPDNVTTGFQNVTSMVRKADSDKSVADKRREKDLLDKLLDSDTEDELLIQSKKSPVKENQSKRPNSEHICEEDSRQETENNSNESNGSFENENDQNKESGVSYPLSYRQTPPKLGIRRLSPQVSMNINLDAPVATEEAAPLVTGKSTSPPENVAEKRNSPILNSSNRECAPKQKTLGLKRRKANSITDQLKRHYSRVIKPNTAYRTITVSDDEKSVEDSINNQQLHKNKNLGSTSDDDDAFDEGDVFDDGMDDELALIANDKLSSFERSLSPNLPAQNNASDEVYKHEFSPGEGVLNQEQMLELYTSYFSLLDPADRVDFYDPLNFNQKPNTSINHRGRIGHSQVSRRLLQSSKFIGSVSTTTAKNIVKRYAQTYNTTNHQHNMHIVQEITNSSSK.

Residues Ile-94–Lys-261 enclose the Helicase ATP-binding domain. Leu-107–Thr-114 is a binding site for ATP. Residues Asp-209–His-212 carry the DEAH box motif. A Helicase C-terminal domain is found at Ser-468–Ile-641. 5 disordered regions span residues Glu-493–Lys-534, Lys-684–Phe-708, Ile-758–Gly-824, Leu-850–Pro-880, and Val-918–Gly-953. The segment covering Lys-499–Lys-511 has biased composition (basic residues). The segment covering Thr-518–Gln-532 has biased composition (basic and acidic residues). Residues Lys-684–Glu-705 show a composition bias toward basic residues. Residues Pro-764–Thr-787 are compositionally biased toward basic and acidic residues. Over residues Glu-788–Glu-799 the composition is skewed to low complexity. The span at Asp-927 to Thr-943 shows a compositional bias: polar residues. A compositionally biased stretch (acidic residues) spans Ser-944–Gly-953.

Belongs to the DEAD box helicase family. DEAH subfamily. FANCM sub-subfamily. As to quaternary structure, interacts with the MHF histone-fold complex to form the FANCM-MHF complex.

It localises to the nucleus. It catalyses the reaction ATP + H2O = ADP + phosphate + H(+). In terms of biological role, ATP-dependent DNA helicase involved in DNA damage repair by homologous recombination and in genome maintenance. Capable of unwinding D-loops. Plays a role in limiting crossover recombinants during mitotic DNA double-strand break (DSB) repair. Component of a FANCM-MHF complex which promotes gene conversion at blocked replication forks, probably by reversal of the stalled fork. The polypeptide is ATP-dependent DNA helicase MPH1 (Debaryomyces hansenii (strain ATCC 36239 / CBS 767 / BCRC 21394 / JCM 1990 / NBRC 0083 / IGC 2968) (Yeast)).